The chain runs to 427 residues: UPF0415 protein C7orf25 homolog (427 aa).

Over residues 200 to 234 the composition is skewed to acidic residues; it reads GGEEEDEEDQEGDHEDLVEEEEDGEDDNDDDSDDT. The segment at 200 to 236 is disordered; the sequence is GGEEEDEEDQEGDHEDLVEEEEDGEDDNDDDSDDTDL.

It belongs to the UPF0415 family.

The chain is UPF0415 protein C7orf25 homolog from Danio rerio (Zebrafish).